The chain runs to 510 residues: Flavonoid 3',5'-hydroxylase (510 aa).

Cys447 is a heme binding site.

The protein belongs to the cytochrome P450 family. Requires heme as cofactor.

The catalysed reaction is a 3',5'-unsubstituted flavanone + 2 reduced [NADPH--hemoprotein reductase] + 2 O2 = a 3',5'-dihydroxyflavanone + 2 oxidized [NADPH--hemoprotein reductase] + 2 H2O + 2 H(+). It participates in pigment biosynthesis; anthocyanin biosynthesis. Catalyzes the 3'5'-hydroxylation of naringenin and eriodictyol to form 5,7,3,'4',5'-pentahydroxyflavanone and 3',5'-hydroxylation of dihydrokaempferol and dihydroquercetin to form dihydromyricetin. This Eustoma exaltatum subsp. russellianum (Bluebells) protein is Flavonoid 3',5'-hydroxylase (CYP75A7).